The primary structure comprises 336 residues: Toluate 1,2-dioxygenase electron transfer component (336 aa).

A 2Fe-2S ferredoxin-type domain is found at 3 to 97 (HKVATDFEDG…DCVIRVPAAS (95 aa)). Residues cysteine 40, cysteine 45, cysteine 48, and cysteine 81 each coordinate [2Fe-2S] cluster. A ferredoxin-reductase region spans residues 99–336 (VCKTQQAGYQ…FYYEKFAASA (238 aa)). An FAD-binding FR-type domain is found at 104 to 204 (QAGYQAAISN…AGPLGAFYLR (101 aa)).

The protein belongs to the bacterial ring-hydroxylating dioxygenase ferredoxin reductase family. This dioxygenase system consists of three proteins: the two subunits of the hydroxylase component (XylX and XylY), and an electron transfer component (XylZ). FAD serves as cofactor. Requires [2Fe-2S] cluster as cofactor.

It catalyses the reaction 2 reduced [2Fe-2S]-[ferredoxin] + NAD(+) + H(+) = 2 oxidized [2Fe-2S]-[ferredoxin] + NADH. In terms of biological role, electron transfer component of toluate 1,2-dioxygenase system. The polypeptide is Toluate 1,2-dioxygenase electron transfer component (xylZ) (Pseudomonas putida (Arthrobacter siderocapsulatus)).